Reading from the N-terminus, the 255-residue chain is Aliphatic sulfonates import ATP-binding protein SsuB (255 aa).

In terms of domain architecture, ABC transporter spans I7–Q231. G39–S46 contacts ATP.

It belongs to the ABC transporter superfamily. Aliphatic sulfonates importer (TC 3.A.1.17.2) family. In terms of assembly, the complex is composed of two ATP-binding proteins (SsuB), two transmembrane proteins (SsuC) and a solute-binding protein (SsuA).

It localises to the cell membrane. The catalysed reaction is ATP + H2O + aliphatic sulfonate-[sulfonate-binding protein]Side 1 = ADP + phosphate + aliphatic sulfonateSide 2 + [sulfonate-binding protein]Side 1.. Part of the ABC transporter complex SsuABC involved in aliphatic sulfonates import. Responsible for energy coupling to the transport system. Is also involved in taurine transport. This Bacillus subtilis (strain 168) protein is Aliphatic sulfonates import ATP-binding protein SsuB.